The primary structure comprises 190 residues: Dynactin subunit 6 (190 aa).

Residue Thr-186 is modified to Phosphothreonine; by CDK1.

It belongs to the dynactin subunits 5/6 family. Dynactin subunit 6 subfamily. Subunit of dynactin, a multiprotein complex part of a tripartite complex with dynein and a adapter, such as BICDL1, BICD2 or HOOK3. The dynactin complex is built around ACTR1A/ACTB filament and consists of an actin-related filament composed of a shoulder domain, a pointed end and a barbed end. Its length is defined by its flexible shoulder domain. The soulder is composed of 2 DCTN1 subunits, 4 DCTN2 and 2 DCTN3. The 4 DCNT2 (via N-terminus) bind the ACTR1A filament and act as molecular rulers to determine the length. The pointed end is important for binding dynein-dynactin cargo adapters. Consists of 4 subunits: ACTR10, DCNT4, DCTN5 and DCTN6. Within the complex DCTN6 forms a heterodimer with DCTN5. The barbed end is composed of a CAPZA1:CAPZB heterodimers, which binds ACTR1A/ACTB filament and dynactin and stabilizes dynactin. Interacts with PLK1. Interacts with N4BP2L1. Post-translationally, phosphorylation at Thr-186 by CDK1 during mitotic prometaphase creates a binding site for PLK1 that facilitates its recruitment to kinetochores.

It is found in the cytoplasm. It localises to the cytoskeleton. The protein localises to the chromosome. Its subcellular location is the centromere. The protein resides in the kinetochore. In terms of biological role, part of the dynactin complex that activates the molecular motor dynein for ultra-processive transport along microtubules. The polypeptide is Dynactin subunit 6 (DCTN6) (Pongo abelii (Sumatran orangutan)).